Reading from the N-terminus, the 420-residue chain is Glucose-1-phosphate adenylyltransferase 2 (420 aa).

Residues Y109, G175, 190–191, and S208 contribute to the alpha-D-glucose 1-phosphate site; that span reads EK.

This sequence belongs to the bacterial/plant glucose-1-phosphate adenylyltransferase family. Homotetramer.

It catalyses the reaction alpha-D-glucose 1-phosphate + ATP + H(+) = ADP-alpha-D-glucose + diphosphate. It participates in glycan biosynthesis; glycogen biosynthesis. Functionally, involved in the biosynthesis of ADP-glucose, a building block required for the elongation reactions to produce glycogen. Catalyzes the reaction between ATP and alpha-D-glucose 1-phosphate (G1P) to produce pyrophosphate and ADP-Glc. In Pseudoalteromonas atlantica (strain T6c / ATCC BAA-1087), this protein is Glucose-1-phosphate adenylyltransferase 2.